Reading from the N-terminus, the 216-residue chain is ATP-dependent Clp protease proteolytic subunit (216 aa).

Serine 101 (nucleophile) is an active-site residue. Residue histidine 126 is part of the active site.

It belongs to the peptidase S14 family. As to quaternary structure, component of the chloroplastic Clp protease core complex.

It is found in the plastid. Its subcellular location is the chloroplast stroma. It catalyses the reaction Hydrolysis of proteins to small peptides in the presence of ATP and magnesium. alpha-casein is the usual test substrate. In the absence of ATP, only oligopeptides shorter than five residues are hydrolyzed (such as succinyl-Leu-Tyr-|-NHMec, and Leu-Tyr-Leu-|-Tyr-Trp, in which cleavage of the -Tyr-|-Leu- and -Tyr-|-Trp bonds also occurs).. Its function is as follows. Cleaves peptides in various proteins in a process that requires ATP hydrolysis. Has a chymotrypsin-like activity. Plays a major role in the degradation of misfolded proteins. This is ATP-dependent Clp protease proteolytic subunit from Saccharum hybrid (Sugarcane).